The following is a 905-amino-acid chain: Catenin alpha-2 (905 aa).

A Phosphothreonine modification is found at threonine 632. 3 positions are modified to phosphoserine: serine 640, serine 651, and serine 853. Over residues valine 869–threonine 879 the composition is skewed to basic and acidic residues. A disordered region spans residues valine 869–serine 891. Over residues arginine 880–isoleucine 890 the composition is skewed to basic residues. Phosphoserine is present on serine 891.

The protein belongs to the vinculin/alpha-catenin family. As to quaternary structure, interacts with CDH1 and CDH2. Interacts with ZNF639; recruits CTNNA2 to the nucleus. Interacts with F-actin.

The protein resides in the cell membrane. The protein localises to the cytoplasm. It is found in the cytoskeleton. It localises to the cell junction. Its subcellular location is the adherens junction. The protein resides in the cell projection. The protein localises to the axon. It is found in the nucleus. In terms of biological role, may function as a linker between cadherin adhesion receptors and the cytoskeleton to regulate cell-cell adhesion and differentiation in the nervous system. Required for proper regulation of cortical neuronal migration and neurite growth. It acts as a negative regulator of Arp2/3 complex activity and Arp2/3-mediated actin polymerization. It thereby suppresses excessive actin branching which would impair neurite growth and stability. Regulates morphological plasticity of synapses and cerebellar and hippocampal lamination during development. Functions in the control of startle modulation. This Pongo abelii (Sumatran orangutan) protein is Catenin alpha-2 (CTNNA2).